The following is a 268-amino-acid chain: Undecaprenyl-diphosphatase (268 aa).

7 helical membrane-spanning segments follow: residues 47-67, 83-103, 109-129, 144-164, 184-204, 218-238, and 246-266; these read FAVL…FAKL, FVIG…VAGS, LFNP…LLWV, FPLP…IPGV, AAEF…VYDF, IVAI…KTFL, and FELF…ALAM.

The protein belongs to the UppP family.

The protein localises to the cell inner membrane. The catalysed reaction is di-trans,octa-cis-undecaprenyl diphosphate + H2O = di-trans,octa-cis-undecaprenyl phosphate + phosphate + H(+). Functionally, catalyzes the dephosphorylation of undecaprenyl diphosphate (UPP). Confers resistance to bacitracin. The protein is Undecaprenyl-diphosphatase of Rhodopseudomonas palustris (strain BisB5).